The sequence spans 375 residues: Ferredoxin--NADP reductase, root-type isozyme, chloroplastic (375 aa).

A chloroplast-targeting transit peptide spans 1–60 (MAHSALSQVSVAVPLQTDSSFRRSTFKATSITFSDRSSWISMPPIDLKAAPSRNQHIVCM). The region spanning 91-219 (KEPYTATIVS…TGPSGKIMLL (129 aa)) is the FAD-binding FR-type domain. Residues 151-154 (RLYL), 172-174 (CVR), Tyr-178, 193-195 (VCS), and Thr-235 contribute to the FAD site. NADP(+) is bound at residue Arg-174. NADP(+)-binding positions include Thr-235, 266 to 267 (VA), 296 to 297 (SR), Lys-306, 334 to 335 (GL), and Glu-373.

This sequence belongs to the ferredoxin--NADP reductase type 1 family. Requires FAD as cofactor.

Its subcellular location is the plastid. It is found in the chloroplast. The catalysed reaction is 2 reduced [2Fe-2S]-[ferredoxin] + NADP(+) + H(+) = 2 oxidized [2Fe-2S]-[ferredoxin] + NADPH. The protein operates within energy metabolism; photosynthesis. In terms of biological role, may play a key role in regulating the relative amounts of cyclic and non-cyclic electron flow to meet the demands of the plant for ATP and reducing power. Is involved in nitrate assimilation. This Nicotiana tabacum (Common tobacco) protein is Ferredoxin--NADP reductase, root-type isozyme, chloroplastic.